The chain runs to 394 residues: NAD(P)H-quinone oxidoreductase subunit H (394 aa).

This sequence belongs to the complex I 49 kDa subunit family. NDH-1 can be composed of about 15 different subunits; different subcomplexes with different compositions have been identified which probably have different functions.

The protein resides in the cellular thylakoid membrane. It catalyses the reaction a plastoquinone + NADH + (n+1) H(+)(in) = a plastoquinol + NAD(+) + n H(+)(out). It carries out the reaction a plastoquinone + NADPH + (n+1) H(+)(in) = a plastoquinol + NADP(+) + n H(+)(out). Functionally, NDH-1 shuttles electrons from an unknown electron donor, via FMN and iron-sulfur (Fe-S) centers, to quinones in the respiratory and/or the photosynthetic chain. The immediate electron acceptor for the enzyme in this species is believed to be plastoquinone. Couples the redox reaction to proton translocation, and thus conserves the redox energy in a proton gradient. Cyanobacterial NDH-1 also plays a role in inorganic carbon-concentration. The sequence is that of NAD(P)H-quinone oxidoreductase subunit H from Nostoc punctiforme (strain ATCC 29133 / PCC 73102).